A 214-amino-acid chain; its full sequence is Ribonuclease HII (214 aa).

The region spanning 18–208 is the RNase H type-2 domain; it reads SRVVGVDEVG…SLLPSEAHLC (191 aa). A divalent metal cation contacts are provided by Asp-24, Glu-25, and Asp-116.

Belongs to the RNase HII family. Mn(2+) serves as cofactor. The cofactor is Mg(2+).

It is found in the cytoplasm. The enzyme catalyses Endonucleolytic cleavage to 5'-phosphomonoester.. Its function is as follows. Endonuclease that specifically degrades the RNA of RNA-DNA hybrids. The polypeptide is Ribonuclease HII (Thermosynechococcus vestitus (strain NIES-2133 / IAM M-273 / BP-1)).